Here is a 156-residue protein sequence, read N- to C-terminus: Cell division protein SepF (156 aa).

The protein belongs to the SepF family. As to quaternary structure, homodimer. Interacts with FtsZ.

The protein localises to the cytoplasm. Functionally, cell division protein that is part of the divisome complex and is recruited early to the Z-ring. Probably stimulates Z-ring formation, perhaps through the cross-linking of FtsZ protofilaments. Its function overlaps with FtsA. This is Cell division protein SepF from Ruminiclostridium cellulolyticum (strain ATCC 35319 / DSM 5812 / JCM 6584 / H10) (Clostridium cellulolyticum).